A 31-amino-acid chain; its full sequence is Delta-actitoxin-Dar1b (31 aa).

The protein belongs to the sea anemone short toxin (type III) family. Post-translationally, contains 4 disulfide bonds.

It localises to the secreted. It is found in the nematocyst. Functionally, binds specifically to voltage-gated sodium channels (Nav), thereby delaying their inactivation during signal transduction. In Dofleinia armata (Armed anemone), this protein is Delta-actitoxin-Dar1b.